We begin with the raw amino-acid sequence, 561 residues long: Potassium-transporting ATPase potassium-binding subunit (561 aa).

12 consecutive transmembrane segments (helical) span residues 2-22 (GQGL…TPVL), 66-86 (IRAI…LIYF), 135-155 (ALGF…IAFI), 177-197 (ILLP…VPQT), 253-273 (LIET…YGVF), 280-300 (AWLL…VAAG), 327-347 (FGWA…CGAV), 354-374 (LMPQ…IWGG), 378-398 (GTAY…LMVG), 413-433 (IVLA…PSAI), 482-502 (LSTS…MLLL), and 531-551 (AGIV…LGPI).

Belongs to the KdpA family. The system is composed of three essential subunits: KdpA, KdpB and KdpC.

It is found in the cell inner membrane. Part of the high-affinity ATP-driven potassium transport (or Kdp) system, which catalyzes the hydrolysis of ATP coupled with the electrogenic transport of potassium into the cytoplasm. This subunit binds the periplasmic potassium ions and delivers the ions to the membrane domain of KdpB through an intramembrane tunnel. The chain is Potassium-transporting ATPase potassium-binding subunit from Nostoc sp. (strain PCC 7120 / SAG 25.82 / UTEX 2576).